The chain runs to 492 residues: DEAD-box ATP-dependent RNA helicase RhpA (492 aa).

The short motif at 20–48 (PSFNDLGLKESVLKSVYEAGFTSPSPIQE) is the Q motif element. The region spanning 51 to 220 (IPAVLQGRDV…DKILENPIKI (170 aa)) is the Helicase ATP-binding domain. Residue 64–71 (AQTGTGKT) coordinates ATP. A DEAD box motif is present at residues 168–171 (DESD). A Helicase C-terminal domain is found at 231 to 393 (DITQRFYVIN…EIPTINENQI (163 aa)). Residues 445–492 (AIQNPKEKTPKPSNKKTPQHERARSFKKGQHRDRHPKTNHYSKKPKRR) are disordered. Positions 469 to 492 (SFKKGQHRDRHPKTNHYSKKPKRR) are enriched in basic residues.

This sequence belongs to the DEAD box helicase family. Homodimer. Interacts with RNase J (rnj), might be a member of a minimal RNA degradosome complex.

It localises to the cytoplasm. It catalyses the reaction ATP + H2O = ADP + phosphate + H(+). Its function is as follows. DEAD-box RNA helicase probably involved in RNA degradation. Unwinds dsRNA in both 5'- and 3'-directions. In Helicobacter pylori (strain ATCC 700392 / 26695) (Campylobacter pylori), this protein is DEAD-box ATP-dependent RNA helicase RhpA (rhpA).